The following is a 217-amino-acid chain: Phosphate-specific transport system accessory protein PhoU homolog 2 (217 aa).

It belongs to the PhoU family. Homodimer.

It is found in the cytoplasm. Its function is as follows. Plays a role in the regulation of phosphate uptake. The sequence is that of Phosphate-specific transport system accessory protein PhoU homolog 2 from Methanothermobacter thermautotrophicus (strain ATCC 29096 / DSM 1053 / JCM 10044 / NBRC 100330 / Delta H) (Methanobacterium thermoautotrophicum).